Reading from the N-terminus, the 942-residue chain is Eukaryotic translation initiation factor 3 subunit A (942 aa).

One can recognise a PCI domain in the interval 320–494 (FKKYSSIILL…NTVTFFKDPF (175 aa)). 4 coiled-coil regions span residues 499–529 (KAAG…GEEI), 588–669 (ITQT…KQRE), 705–734 (SKLS…AYRK), and 821–912 (IEEV…RKAQ). The disordered stretch occupies residues 502-546 (GTVEEEEEEEEEEGEEVEGEEAETGEEIVEEGEEHENEENKEPEP). Positions 504 to 538 (VEEEEEEEEEEGEEVEGEEAETGEEIVEEGEEHEN) are enriched in acidic residues. 2 stretches are compositionally biased toward basic and acidic residues: residues 836 to 870 (RKAE…ERKS) and 889 to 911 (RSAK…ERKA). The tract at residues 836–942 (RKAEIEAEER…KMKLRRASKK (107 aa)) is disordered.

Belongs to the eIF-3 subunit A family. In terms of assembly, component of the eukaryotic translation initiation factor 3 (eIF-3) complex.

It is found in the cytoplasm. In terms of biological role, RNA-binding component of the eukaryotic translation initiation factor 3 (eIF-3) complex, which is involved in protein synthesis of a specialized repertoire of mRNAs and, together with other initiation factors, stimulates binding of mRNA and methionyl-tRNAi to the 40S ribosome. The eIF-3 complex specifically targets and initiates translation of a subset of mRNAs involved in cell proliferation. The protein is Eukaryotic translation initiation factor 3 subunit A of Vanderwaltozyma polyspora (strain ATCC 22028 / DSM 70294 / BCRC 21397 / CBS 2163 / NBRC 10782 / NRRL Y-8283 / UCD 57-17) (Kluyveromyces polysporus).